Consider the following 251-residue polypeptide: Probable transcriptional regulatory protein Pmob_0807 (251 aa).

The disordered stretch occupies residues 1–22 (MSGHNKWANIKHRKGAQDAKRS).

This sequence belongs to the TACO1 family.

The protein localises to the cytoplasm. The protein is Probable transcriptional regulatory protein Pmob_0807 of Petrotoga mobilis (strain DSM 10674 / SJ95).